Here is a 288-residue protein sequence, read N- to C-terminus: Galactose/N-acetyl-D-galactosamine lectin light subunit 1 (288 aa).

Residues 1–15 (MIILVLLISYSFGKT) form the signal peptide. N-linked (GlcNAc...) asparagine glycosylation is found at Asn-205 and Asn-261.

In terms of assembly, heterodimer composed of a 170 kDa heavy subunit (hgl) and a 31/35 kDa light subunit (lgl); disulfide-linked.

The protein localises to the cell membrane. Light subunit of a heterodimeric lectin; the heavy subunit binds galactose and N-acetyl-D-galactosamine of host glycoproteins and thus mediates adhesion to host cells. The polypeptide is Galactose/N-acetyl-D-galactosamine lectin light subunit 1 (Entamoeba histolytica (strain ATCC 30459 / HM-1:IMSS / ABRM)).